A 341-amino-acid polypeptide reads, in one-letter code: Tetraacyldisaccharide 4'-kinase (341 aa).

64–71 contacts ATP; it reads AVGGSGKT.

This sequence belongs to the LpxK family.

The enzyme catalyses a lipid A disaccharide + ATP = a lipid IVA + ADP + H(+). Its pathway is glycolipid biosynthesis; lipid IV(A) biosynthesis; lipid IV(A) from (3R)-3-hydroxytetradecanoyl-[acyl-carrier-protein] and UDP-N-acetyl-alpha-D-glucosamine: step 6/6. Its function is as follows. Transfers the gamma-phosphate of ATP to the 4'-position of a tetraacyldisaccharide 1-phosphate intermediate (termed DS-1-P) to form tetraacyldisaccharide 1,4'-bis-phosphate (lipid IVA). This chain is Tetraacyldisaccharide 4'-kinase, found in Azoarcus sp. (strain BH72).